A 349-amino-acid polypeptide reads, in one-letter code: Cyclic amide hydrolase (349 aa).

The RU A stretch occupies residues 1–90 (MTSPEDTAGV…AVFVDDPASS (90 aa)). Arg38 lines the substrate pocket. Positions 99-231 (GLSIGVTTTA…AAVLVMGNSP (133 aa)) are RU B. Lys149 is an active-site residue. Substrate contacts are provided by residues Arg176, 214-215 (SA), Lys311, and 330-331 (SG). Ser214 functions as the Nucleophile in the catalytic mechanism. Residues 237 to 349 (YRIGHGVLRD…GGGTVAVIAR (113 aa)) are RU C.

The protein belongs to the cyclic amide hydrolase (CyAH) family. As to quaternary structure, homotetramer.

Functionally, cyclic amide hydrolase of unknown substrate specificity. Catalyzes the hydrolytic ring-opening of a cyclic amide. Does not act on cyanuric acid nor barbituric acid. This chain is Cyclic amide hydrolase, found in Rhodococcus sp.